The primary structure comprises 248 residues: Triosephosphate isomerase (248 aa).

9–11 provides a ligand contact to substrate; it reads NWK. The active-site Electrophile is His-94. Catalysis depends on Glu-166, which acts as the Proton acceptor. Residues Gly-172, Ser-212, and 233 to 234 contribute to the substrate site; that span reads GG.

Belongs to the triosephosphate isomerase family. As to quaternary structure, homodimer.

It localises to the cytoplasm. It carries out the reaction D-glyceraldehyde 3-phosphate = dihydroxyacetone phosphate. Its pathway is carbohydrate biosynthesis; gluconeogenesis. The protein operates within carbohydrate degradation; glycolysis; D-glyceraldehyde 3-phosphate from glycerone phosphate: step 1/1. Involved in the gluconeogenesis. Catalyzes stereospecifically the conversion of dihydroxyacetone phosphate (DHAP) to D-glyceraldehyde-3-phosphate (G3P). This chain is Triosephosphate isomerase, found in Caldanaerobacter subterraneus subsp. tengcongensis (strain DSM 15242 / JCM 11007 / NBRC 100824 / MB4) (Thermoanaerobacter tengcongensis).